A 75-amino-acid chain; its full sequence is U9-theraphotoxin-Cg1a (75 aa).

Residues Met1–Ala21 form the signal peptide. Positions Asn22–Arg29 are excised as a propeptide. 3 disulfides stabilise this stretch: Cys31–Cys46, Cys38–Cys51, and Cys45–Cys58.

This sequence belongs to the neurotoxin 10 (Hwtx-1) family. 43 (Jztx-49) subfamily. Expressed by the venom gland.

It localises to the secreted. Its function is as follows. Probable ion channel inhibitor. The polypeptide is U9-theraphotoxin-Cg1a (Chilobrachys guangxiensis (Chinese earth tiger tarantula)).